The sequence spans 485 residues: NADH-quinone oxidoreductase subunit N (485 aa).

14 consecutive transmembrane segments (helical) span residues 8–28 (LIALLPLLIVGLTVVVVMLSI), 35–55 (FLNATLSVIGLNAALVSLWFV), 71–91 (GFAMLYTGLVLLASLATCTFA), 105–125 (FYLLVLIAALGGILLANANHL), 127–147 (SLFLGIELISLPLFGLVGYAF), 159–179 (YTILSAAASSFLLFGMALVYA), 203–223 (LLAGFGLMIVGLGFKLSLVPF), 235–255 (PAPVSTFLATASKIAIFGVVM), 271–291 (VVLAIIAFASIIFGNLMALSQ), 297–317 (LLGYSSISHLGYLLVALIALQ), 326–346 (VGVYLVGYLFSSLGAFGVVSL), 373–393 (AAVMTVMMLSLAGIPMTLGFI), 408–430 (WWLVGAVVVGSAIGLYYYLRVAV), and 455–475 (IVVLISALLVLVLGVWPQPLI).

The protein belongs to the complex I subunit 2 family. NDH-1 is composed of 13 different subunits. Subunits NuoA, H, J, K, L, M, N constitute the membrane sector of the complex.

Its subcellular location is the cell inner membrane. The enzyme catalyses a quinone + NADH + 5 H(+)(in) = a quinol + NAD(+) + 4 H(+)(out). Functionally, NDH-1 shuttles electrons from NADH, via FMN and iron-sulfur (Fe-S) centers, to quinones in the respiratory chain. The immediate electron acceptor for the enzyme in this species is believed to be ubiquinone. Couples the redox reaction to proton translocation (for every two electrons transferred, four hydrogen ions are translocated across the cytoplasmic membrane), and thus conserves the redox energy in a proton gradient. This is NADH-quinone oxidoreductase subunit N from Escherichia coli O1:K1 / APEC.